Consider the following 209-residue polypeptide: Uracil phosphoribosyltransferase (209 aa).

5-phospho-alpha-D-ribose 1-diphosphate is bound by residues Arg79, Arg104, and 131 to 139; that span reads DPMLATGGS. Uracil-binding positions include Ile194 and 199 to 201; that span reads GDA. Position 200 (Asp200) interacts with 5-phospho-alpha-D-ribose 1-diphosphate.

The protein belongs to the UPRTase family. Mg(2+) is required as a cofactor.

It catalyses the reaction UMP + diphosphate = 5-phospho-alpha-D-ribose 1-diphosphate + uracil. It functions in the pathway pyrimidine metabolism; UMP biosynthesis via salvage pathway; UMP from uracil: step 1/1. Allosterically activated by GTP. In terms of biological role, catalyzes the conversion of uracil and 5-phospho-alpha-D-ribose 1-diphosphate (PRPP) to UMP and diphosphate. The polypeptide is Uracil phosphoribosyltransferase (Geobacillus sp. (strain WCH70)).